A 189-amino-acid polypeptide reads, in one-letter code: MERNEVAPGMLLVAAPDMASEDFERSIVLIIEHSPATTFGVNISSRSDVAVANVLPEWVDLTSKPQALYIGGPLSQQAVVGLGVTKPGVDIENSTSFNKLANRLVHVDLRSAPEDVADDLEGMRFFAGYAEWAPGQLNEEIEQGDWFVTPALPSDIIAPGRVDIWGDVMRRQAMPLPLYSTFPSDPSDN.

Belongs to the UPF0301 (AlgH) family.

This is UPF0301 protein Cgl3084/cg3414 from Corynebacterium glutamicum (strain ATCC 13032 / DSM 20300 / JCM 1318 / BCRC 11384 / CCUG 27702 / LMG 3730 / NBRC 12168 / NCIMB 10025 / NRRL B-2784 / 534).